Consider the following 216-residue polypeptide: Ras-related protein Rab-11A (216 aa).

Position 2 is an N-acetylglycine (glycine 2). 12 residues coordinate GTP: serine 20, glycine 21, valine 22, glycine 23, lysine 24, serine 25, asparagine 26, asparagine 37, leucine 38, serine 40, serine 42, and threonine 43. Serine 25 contacts Mg(2+). Residues 36–47 carry the Switch 1 motif; it reads FNLESKSTIGVE. Threonine 43 and aspartate 66 together coordinate Mg(2+). A Switch 2 motif is present at residues 67–86; the sequence is TAGQERYRAITSAYYRGAVG. Residues glycine 69, asparagine 124, lysine 125, aspartate 127, alanine 155, and leucine 156 each contribute to the GTP site. The interval 183–211 is disordered; it reads DRRENDMSPSNNVVPIHVPPTTENKPKVQ. Residues cysteine 212 and cysteine 213 are each lipidated (S-geranylgeranyl cysteine). Cysteine 213 bears the Cysteine methyl ester mark. A propeptide spans 214-216 (removed in mature form); that stretch reads QNI.

Belongs to the small GTPase superfamily. Rab family. In terms of assembly, interacts (GTP-bound form) with RAB11FIPs (via their C-termini) including RAB11FIP1, RAB11FIP2, RAB11FIP3, RAB11FIP4 and RAB11FIP5 effectors. Forms a complex with RAB11FIP3 and dynein intermediate chain DYNC1LI1; the interaction between RAB11A1 and RAB11FIP3 is direct; the complex regulates endocytic trafficking. Interacts with EVI5; EVI5 and RAB11FIP3 may be mutually exclusive and compete for binding RAB11A. Interacts with SGSM1, SGSM2, SGSM3 and VIPAS39. Interacts with EXOC6 in a GTP-dependent manner. Interacts with RAB11FIP5. Interacts with STXBP6. Interacts (GDP-bound form) with ZFYVE27. Interacts with BIRC6/bruce. May interact with TBC1D14. Interacts with UNC119; in a cell cycle-dependent manner. GDP-bound and nucleotide-free forms interact with SH3BP5. Interacts (GDP-bound form) with KIF5A in a ZFYVE27-dependent manner. Interacts (GDP-bound form) with RELCH. Found in a complex composed of RELCH, OSBP1 and RAB11A. Interacts with TBC1D12. Interacts with DEF6. Interacts with ATP9A. Forms a heterotetramer with RAB11FIP3; the GTP-bound form is preferred for binding. Forms a complex with Rabin8/RAB3IP and RAB11FIP3, probably a heterohexamer with two of each protein subunit, where Rabin8/RAB3IP and RAB11FIP3 simultaneously bind to RAB11A; the complex promotes preciliary trafficking and cilia growth. Forms a complex containing RAB11A, ASAP1, Rabin8/RAB3IP, RAP11FIP3 and ARF4; the complex promotes preciliary trafficking; the complex binds to RHO in photoreceptor cells and promotes RHO ciliary transport. Interacts (GTP-bound form) with WDR44; the interaction prevents RAB11A-RAB3IP-RAB11FIP3 complex formation. Mg(2+) serves as cofactor. In terms of tissue distribution, detected in various tissues, such as brain, testis, spleen, and heart.

The protein resides in the cell membrane. Its subcellular location is the endosome membrane. The protein localises to the recycling endosome membrane. It is found in the cleavage furrow. It localises to the cytoplasmic vesicle. The protein resides in the phagosome. Its subcellular location is the cytoplasmic vesicle membrane. The protein localises to the golgi apparatus. It is found in the trans-Golgi network. The enzyme catalyses GTP + H2O = GDP + phosphate + H(+). Its activity is regulated as follows. Regulated by guanine nucleotide exchange factors (GEFs) which promote the exchange of bound GDP for free GTP. Regulated by GTPase activating proteins (GAPs) which increase the GTP hydrolysis activity. Inhibited by GDP dissociation inhibitors (GDIs) which prevent Rab-GDP dissociation. Functionally, the small GTPases Rab are key regulators of intracellular membrane trafficking, from the formation of transport vesicles to their fusion with membranes. Rabs cycle between an inactive GDP-bound form and an active GTP-bound form that is able to recruit to membranes different set of downstream effectors directly responsible for vesicle formation, movement, tethering and fusion. The small Rab GTPase RAB11A regulates endocytic recycling. Forms a functional Rab11/RAB11FIP3/dynein complex that regulates the movement of peripheral sorting endosomes (SE) along microtubule tracks toward the microtubule organizing center/centrosome, generating the endosomal recycling compartment (ERC). Acts as a major regulator of membrane delivery during cytokinesis. Together with MYO5B and RAB8A participates in epithelial cell polarization. Together with Rabin8/RAB3IP, RAB8A, the exocyst complex, PARD3, PRKCI, ANXA2, CDC42 and DNMBP promotes transcytosis of PODXL to the apical membrane initiation sites (AMIS), apical surface formation and lumenogenesis. Together with MYO5B participates in CFTR trafficking to the plasma membrane and TF (Transferrin) recycling in nonpolarized cells. Required in a complex with MYO5B and RAB11FIP2 for the transport of NPC1L1 to the plasma membrane. Participates in the sorting and basolateral transport of CDH1 from the Golgi apparatus to the plasma membrane. Regulates the recycling of FCGRT (receptor of Fc region of monomeric IgG) to basolateral membranes. May also play a role in melanosome transport and release from melanocytes. Promotes Rabin8/RAB3IP preciliary vesicular trafficking to mother centriole by forming a ciliary targeting complex containing Rab11, ASAP1, Rabin8/RAB3IP, RAB11FIP3 and ARF4, thereby regulating ciliogenesis initiation. On the contrary, upon LPAR1 receptor signaling pathway activation, interaction with phosphorylated WDR44 prevents Rab11-RAB3IP-RAB11FIP3 complex formation and cilia growth. Participates in the export of a subset of neosynthesized proteins through a Rab8-Rab10-Rab11-endososomal dependent export route via interaction with WDR44. In Rattus norvegicus (Rat), this protein is Ras-related protein Rab-11A.